We begin with the raw amino-acid sequence, 340 residues long: Glyceraldehyde-3-phosphate dehydrogenase, cytosolic (340 aa).

NAD(+) contacts are provided by residues 16–17 (RI), aspartate 38, and arginine 85. Residues 156 to 158 (SCT), threonine 187, 216 to 217 (TG), and arginine 239 contribute to the D-glyceraldehyde 3-phosphate site. The active-site Nucleophile is the cysteine 157. Asparagine 321 provides a ligand contact to NAD(+).

The protein belongs to the glyceraldehyde-3-phosphate dehydrogenase family. In terms of assembly, homotetramer.

It localises to the cytoplasm. It carries out the reaction D-glyceraldehyde 3-phosphate + phosphate + NAD(+) = (2R)-3-phospho-glyceroyl phosphate + NADH + H(+). Its pathway is carbohydrate degradation; glycolysis; pyruvate from D-glyceraldehyde 3-phosphate: step 1/5. Its function is as follows. Key enzyme in glycolysis that catalyzes the first step of the pathway by converting D-glyceraldehyde 3-phosphate (G3P) into 3-phospho-D-glyceroyl phosphate. Essential for the maintenance of cellular ATP levels and carbohydrate metabolism. This is Glyceraldehyde-3-phosphate dehydrogenase, cytosolic (GAPC) from Pinus sylvestris (Scotch pine).